Here is a 221-residue protein sequence, read N- to C-terminus: MRTYWNVSLDRSNGKRFERLVHYICVPIISIHHAEDTISMTRKEVGHLAETIANHIILDINGTYRTFSVNDIVHCSLEKVITLEGDVTNEFIDRLQILVNKEVQGSQSTQQSLSSVFESTLEKYNSPDDFADYLEETEEEVDYEDYSLDDTIDAISYALKTQEPVQAEWCLLMVDVYTGTLTEVTVETDKDKTLDSILGKYLENGFECVSKKRLGEVLRSA.

The chain is Putative gene 53 protein (53) from Bacillus phage SP01 (Bacteriophage SP01).